The following is a 413-amino-acid chain: Serine/threonine transporter SstT (413 aa).

Transmembrane regions (helical) follow at residues 21-41 (IGLLLGIIFALVSPSLESALG), 61-81 (SVAPILVFVLVIAAIANKKVG), 89-109 (IIYLYLIGTFLSALTAVFASF), 146-166 (ITALFNANFIGILAWAIGLGI), 189-209 (IVHFIISFAPIGVFGLVASTL), 224-244 (LAVLVGSMLFVAFVINPIIVF), 305-325 (MGGAAITITVLTLAAVFTLGI), 337-357 (LVASICACGASGVAGGSLLLI), and 363-383 (LFGISNDIAAQVIGVGFIIGV).

The protein belongs to the dicarboxylate/amino acid:cation symporter (DAACS) (TC 2.A.23) family.

Its subcellular location is the cell inner membrane. The catalysed reaction is L-serine(in) + Na(+)(in) = L-serine(out) + Na(+)(out). It carries out the reaction L-threonine(in) + Na(+)(in) = L-threonine(out) + Na(+)(out). Its function is as follows. Involved in the import of serine and threonine into the cell, with the concomitant import of sodium (symport system). The chain is Serine/threonine transporter SstT from Mannheimia succiniciproducens (strain KCTC 0769BP / MBEL55E).